The primary structure comprises 475 residues: Ribulose bisphosphate carboxylase large chain (475 aa).

Positions 1–2 (MS) are excised as a propeptide. P3 carries the N-acetylproline modification. An N6,N6,N6-trimethyllysine modification is found at K14. N123 and T173 together coordinate substrate. The active-site Proton acceptor is the K175. K177 provides a ligand contact to substrate. Residues K201, D203, and E204 each contribute to the Mg(2+) site. K201 carries the post-translational modification N6-carboxylysine. H294 serves as the catalytic Proton acceptor. Substrate is bound by residues R295, H327, and S379.

Belongs to the RuBisCO large chain family. Type I subfamily. Heterohexadecamer of 8 large chains and 8 small chains; disulfide-linked. The disulfide link is formed within the large subunit homodimers. Requires Mg(2+) as cofactor. Post-translationally, the disulfide bond which can form in the large chain dimeric partners within the hexadecamer appears to be associated with oxidative stress and protein turnover.

It is found in the plastid. The protein resides in the chloroplast. The enzyme catalyses 2 (2R)-3-phosphoglycerate + 2 H(+) = D-ribulose 1,5-bisphosphate + CO2 + H2O. It catalyses the reaction D-ribulose 1,5-bisphosphate + O2 = 2-phosphoglycolate + (2R)-3-phosphoglycerate + 2 H(+). In terms of biological role, ruBisCO catalyzes two reactions: the carboxylation of D-ribulose 1,5-bisphosphate, the primary event in carbon dioxide fixation, as well as the oxidative fragmentation of the pentose substrate in the photorespiration process. Both reactions occur simultaneously and in competition at the same active site. This Amaranthus tricolor (Joseph's coat) protein is Ribulose bisphosphate carboxylase large chain.